The primary structure comprises 166 residues: MSQYFTLFRIEPAFDIDTENLEQTYRALAARFHPDKFASASAFEQKQAVMMSSTINDAYRTLKNPIDRAAYLLKTSGIDADAPEHTAFAPEFLMQQMEWRETLMEARAGNDLESLKNLDNEIRDEQEKLFCGLKQSFARQDYDTAAQQVRQGRFLDKLRNEISSAL.

Positions 3 to 75 constitute a J domain; the sequence is QYFTLFRIEP…IDRAAYLLKT (73 aa).

This sequence belongs to the HscB family. In terms of assembly, interacts with HscA and stimulates its ATPase activity.

In terms of biological role, co-chaperone involved in the maturation of iron-sulfur cluster-containing proteins. Seems to help targeting proteins to be folded toward HscA. In Neisseria meningitidis serogroup C (strain 053442), this protein is Co-chaperone protein HscB homolog.